A 284-amino-acid chain; its full sequence is Bifunctional protein FolD (284 aa).

NADP(+) contacts are provided by residues 165-167 (GRS) and serine 190.

It belongs to the tetrahydrofolate dehydrogenase/cyclohydrolase family. As to quaternary structure, homodimer.

It carries out the reaction (6R)-5,10-methylene-5,6,7,8-tetrahydrofolate + NADP(+) = (6R)-5,10-methenyltetrahydrofolate + NADPH. It catalyses the reaction (6R)-5,10-methenyltetrahydrofolate + H2O = (6R)-10-formyltetrahydrofolate + H(+). It functions in the pathway one-carbon metabolism; tetrahydrofolate interconversion. Functionally, catalyzes the oxidation of 5,10-methylenetetrahydrofolate to 5,10-methenyltetrahydrofolate and then the hydrolysis of 5,10-methenyltetrahydrofolate to 10-formyltetrahydrofolate. This is Bifunctional protein FolD from Streptococcus equi subsp. zooepidemicus (strain MGCS10565).